A 205-amino-acid polypeptide reads, in one-letter code: Probable transcription factor Ken (205 aa).

C2H2-type zinc fingers lie at residues 106 to 128, 134 to 157, and 173 to 196; these read YRCE…LRVH, FACR…CSVH, and YSCC…SGHH.

It localises to the nucleus. Probable transcription factor, which is required for terminalia development. The chain is Probable transcription factor Ken (ken) from Drosophila yakuba (Fruit fly).